The chain runs to 2462 residues: Serine/threonine-protein kinase Wnk (2462 aa).

Disordered regions lie at residues 18-133 (NRAR…ASKS), 146-248 (NTLP…KSSS), and 365-461 (EDDV…DDDP). Polar residues-rich tracts occupy residues 29–58 (DGTT…NIQK) and 65–78 (NRSA…NPTS). Residues 94–124 (TLSAHTSTSSTTSIQSSPIEPASSLPTLNTT) are compositionally biased toward low complexity. Positions 146 to 155 (NTLPGKTASS) are enriched in polar residues. Composition is skewed to basic and acidic residues over residues 190–205 (QSRE…KIEP), 237–247 (DTKKMEARKSS), and 396–413 (QSEK…KAES). A compositionally biased stretch (low complexity) spans 414 to 452 (SEASAEEAAVTGSSTDASASPLPSTSLVSTTSSATSITK). Residues 471–729 (FKYDKEVGRG…CNELLESEFF (259 aa)) form the Protein kinase domain. Residues Ser481, 551 to 554 (TELM), and Lys601 each bind ATP. Asp618 (proton acceptor) is an active-site residue. Phosphoserine; by autocatalysis occurs at positions 628 and 632. Disordered regions lie at residues 844–873 (LQKQ…DGVK), 893–923 (LALS…QPVQ), and 1006–1055 (PQQQ…LQQQ). Positions 855–870 (VDEDEEEEEESEDEED) are enriched in acidic residues. The span at 893–918 (LALSTNSVEPQQLSTRSNTSIPNSGI) shows a compositional bias: polar residues. 2 stretches are compositionally biased toward low complexity: residues 1006 to 1034 (PQQQ…QPQT) and 1041 to 1055 (HEQQ…LQQQ). A coiled-coil region spans residues 1142 to 1178 (AQHQLQQLQQQQLQQQQLQQQQQIQQQQLQQQQLQQQ). Positions 1236–1251 (QGGQVTLSDAQQQQHP) are enriched in polar residues. 9 disordered regions span residues 1236-1256 (QGGQ…FSAV), 1322-1382 (QQQQ…EQIS), 1418-1465 (GALE…PKLS), 1554-1578 (LTRQ…SDIT), 1615-1699 (NIPN…KDKK), 1762-1790 (DTSE…GNQG), 1828-1895 (QASP…SVGS), 1929-1966 (HEKQ…SINQ), and 2122-2229 (THVQ…FIQS). A compositionally biased stretch (basic residues) spans 1559-1568 (STFRSHQRHR). Positions 1627–1641 (STPPTTTSTMSSSST) are enriched in low complexity. The segment covering 1642-1674 (ASRDAPNSSNDVTIGSGSVSRKTSTASEYTSLS) has biased composition (polar residues). Composition is skewed to polar residues over residues 1828–1852 (QASP…TKPN), 1861–1894 (SVGQ…NSVG), and 1943–1966 (SATS…SINQ). The span at 2125–2136 (QQPSNLQPQQQS) shows a compositional bias: low complexity. Over residues 2137-2160 (VHPNMTQQPQQTPLNGHPSMVNTL) the composition is skewed to polar residues. Residues 2161-2211 (QQQPPQQSLPMQTIQSQQQQHNQMPIISQQQQQQILMQQQQQQGSQQGSQQ) are compositionally biased toward low complexity. Polar residues predominate over residues 2212–2229 (FNLPGTQQTHPQHQFIQS).

Belongs to the protein kinase superfamily. Ser/Thr protein kinase family. WNK subfamily. Mg(2+) is required as a cofactor. In terms of processing, autophosphorylated. Autophosphorylation at Ser-628 and Ser-632 promotes its activity.

Its subcellular location is the cytoplasm. It carries out the reaction L-seryl-[protein] + ATP = O-phospho-L-seryl-[protein] + ADP + H(+). The enzyme catalyses L-threonyl-[protein] + ATP = O-phospho-L-threonyl-[protein] + ADP + H(+). With respect to regulation, activated in response to hyperosmotic stress: cell shrinkage promotes formation of a membraneless compartment that concentrates wnk-1 with its downstrem substrates. Activation requires autophosphorylation. Autophosphorylation and subsequent activation is inhibited by increases in intracellular Cl(-) or K(+). Functionally, serine/threonine-protein kinase component of the WNK-SPAK/OSR1 kinase cascade, which plays an important role in the regulation of electrolyte homeostasis and regulatory volume increase in response to hyperosmotic stress. Wnk mediates regulatory volume increase in response to hyperosmotic stress by acting as a molecular crowding sensor, which senses cell shrinkage and mediates formation of a membraneless compartment by undergoing liquid-liquid phase separation. The membraneless compartment concentrates Wnk with its substrate Fray, promoting Wnk-dependent phosphorylation and activation of downstream kinase Fray. Following activation, Fray catalyzes phosphorylation of ion cotransporters Ncc69 and Irk1, regulating their activity. Phosphorylation of Na-K-Cl cotransporter Ncc69 promotes its activation and ion influx. Involved in circadian rhythms in small ventral lateral (sLNv) pacemaker neurons: in the morning, Wnk activity is repressed by high levels of intracellular chloride; in contrast Wnk activation in the evening promotes the activation of the inwardly rectifying potassium channel Irk1 via Fray. Acts as a positive regulator of the canonical Wnt signaling pathway during wing disk development. This Drosophila melanogaster (Fruit fly) protein is Serine/threonine-protein kinase Wnk.